The chain runs to 394 residues: Phosphopentomutase (394 aa).

Mn(2+) contacts are provided by aspartate 13, aspartate 286, histidine 291, aspartate 327, histidine 328, and histidine 339.

Belongs to the phosphopentomutase family. Mn(2+) is required as a cofactor.

It is found in the cytoplasm. The enzyme catalyses 2-deoxy-alpha-D-ribose 1-phosphate = 2-deoxy-D-ribose 5-phosphate. It catalyses the reaction alpha-D-ribose 1-phosphate = D-ribose 5-phosphate. It participates in carbohydrate degradation; 2-deoxy-D-ribose 1-phosphate degradation; D-glyceraldehyde 3-phosphate and acetaldehyde from 2-deoxy-alpha-D-ribose 1-phosphate: step 1/2. Isomerase that catalyzes the conversion of deoxy-ribose 1-phosphate (dRib-1-P) and ribose 1-phosphate (Rib-1-P) to deoxy-ribose 5-phosphate (dRib-5-P) and ribose 5-phosphate (Rib-5-P), respectively. This Bacillus mycoides (strain KBAB4) (Bacillus weihenstephanensis) protein is Phosphopentomutase.